Consider the following 195-residue polypeptide: Thymidine kinase (195 aa).

ATP-binding positions include 9-16 and 89-92; these read ATMNAGKS and DEAQ. Glu-90 acts as the Proton acceptor in catalysis. Cys-147, Cys-149, Cys-184, and His-187 together coordinate Zn(2+).

Belongs to the thymidine kinase family. In terms of assembly, homotetramer.

The protein localises to the cytoplasm. The catalysed reaction is thymidine + ATP = dTMP + ADP + H(+). The chain is Thymidine kinase from Rhizobium meliloti (strain 1021) (Ensifer meliloti).